The primary structure comprises 920 residues: Isoleucine--tRNA ligase (920 aa).

The 'HIGH' region signature appears at 58 to 68 (PYANGHLHLGH). Glu-569 is a binding site for L-isoleucyl-5'-AMP. The short motif at 610 to 614 (KMSKS) is the 'KMSKS' region element. Lys-613 lines the ATP pocket. The Zn(2+) site is built by Cys-895, Cys-898, Cys-910, and Cys-913.

It belongs to the class-I aminoacyl-tRNA synthetase family. IleS type 1 subfamily. Monomer. Zn(2+) serves as cofactor.

Its subcellular location is the cytoplasm. The enzyme catalyses tRNA(Ile) + L-isoleucine + ATP = L-isoleucyl-tRNA(Ile) + AMP + diphosphate. Catalyzes the attachment of isoleucine to tRNA(Ile). As IleRS can inadvertently accommodate and process structurally similar amino acids such as valine, to avoid such errors it has two additional distinct tRNA(Ile)-dependent editing activities. One activity is designated as 'pretransfer' editing and involves the hydrolysis of activated Val-AMP. The other activity is designated 'posttransfer' editing and involves deacylation of mischarged Val-tRNA(Ile). This is Isoleucine--tRNA ligase from Helicobacter pylori (strain ATCC 700392 / 26695) (Campylobacter pylori).